Reading from the N-terminus, the 207-residue chain is N-(5'-phosphoribosyl)anthranilate isomerase (207 aa).

This sequence belongs to the TrpF family.

It catalyses the reaction N-(5-phospho-beta-D-ribosyl)anthranilate = 1-(2-carboxyphenylamino)-1-deoxy-D-ribulose 5-phosphate. Its pathway is amino-acid biosynthesis; L-tryptophan biosynthesis; L-tryptophan from chorismate: step 3/5. This is N-(5'-phosphoribosyl)anthranilate isomerase from Legionella pneumophila (strain Corby).